Here is a 388-residue protein sequence, read N- to C-terminus: Succinate--CoA ligase [ADP-forming] subunit beta (388 aa).

An ATP-grasp domain is found at 9 to 244 (KQLFARYGLP…QSQEDPREAQ (236 aa)). ATP-binding positions include K46, 53–55 (GRG), E99, T102, and E107. Mg(2+) is bound by residues N199 and D213. Substrate is bound by residues N264 and 321–323 (GIV).

The protein belongs to the succinate/malate CoA ligase beta subunit family. Heterotetramer of two alpha and two beta subunits. Requires Mg(2+) as cofactor.

It catalyses the reaction succinate + ATP + CoA = succinyl-CoA + ADP + phosphate. It carries out the reaction GTP + succinate + CoA = succinyl-CoA + GDP + phosphate. Its pathway is carbohydrate metabolism; tricarboxylic acid cycle; succinate from succinyl-CoA (ligase route): step 1/1. Succinyl-CoA synthetase functions in the citric acid cycle (TCA), coupling the hydrolysis of succinyl-CoA to the synthesis of either ATP or GTP and thus represents the only step of substrate-level phosphorylation in the TCA. The beta subunit provides nucleotide specificity of the enzyme and binds the substrate succinate, while the binding sites for coenzyme A and phosphate are found in the alpha subunit. This Enterobacter sp. (strain 638) protein is Succinate--CoA ligase [ADP-forming] subunit beta.